A 172-amino-acid chain; its full sequence is R-phycocyanin-1 beta chain (172 aa).

Asn72 carries the post-translational modification N4-methylasparagine. Cys82 contributes to the (2R,3E)-phycocyanobilin binding site. Position 153 (Cys153) interacts with (2R,3E)-phycoerythrobilin.

The protein belongs to the phycobiliprotein family. In terms of assembly, heterodimer of an alpha and a beta chain. Dimers further assemble into trimers and the trimers into hexamers. The basic functional unit of phycobiliproteins is a ring-shaped hexamer formed from two back-to-back trimers contacting via the alpha chain subunits. The trimers are composed of alpha/beta subunit heterodimers arranged around a three-fold axis of symmetry. The phycoerythrins also contain a gamma subunit which is located in the center of the hexamer. In terms of processing, contains two covalently linked bilin chromophores.

It is found in the plastid. The protein resides in the chloroplast thylakoid membrane. In terms of biological role, light-harvesting photosynthetic bile pigment-protein from the phycobiliprotein complex (phycobilisome, PBS). Phycocyanin is the major phycobiliprotein in the PBS rod. The chain is R-phycocyanin-1 beta chain (rpcB) from Porphyridium purpureum (Red alga).